The sequence spans 204 residues: Tic20 family protein Ycf60 (204 aa).

The next 4 membrane-spanning stretches (helical) occupy residues 5-25 (LPSL…SFII), 87-107 (LMPL…IFFI), 133-153 (ILLF…PIEF), and 159-179 (GLMM…YSII).

The protein belongs to the Tic20 family.

It is found in the plastid. It localises to the chloroplast membrane. This is Tic20 family protein Ycf60 (ycf60) from Gracilaria tenuistipitata var. liui (Red alga).